The following is a 304-amino-acid chain: Small ribosomal subunit biogenesis GTPase RsgA (304 aa).

A CP-type G domain is found at 78 to 237 (VSFLTRPPVA…VADTPGFNRP (160 aa)). Residues 127-130 (TKTD) and 179-187 (GPSGVGKSS) each bind GTP. Cys262, Cys267, His269, and Cys275 together coordinate Zn(2+).

The protein belongs to the TRAFAC class YlqF/YawG GTPase family. RsgA subfamily. In terms of assembly, monomer. Associates with 30S ribosomal subunit, binds 16S rRNA. Zn(2+) serves as cofactor.

Its subcellular location is the cytoplasm. One of several proteins that assist in the late maturation steps of the functional core of the 30S ribosomal subunit. Helps release RbfA from mature subunits. May play a role in the assembly of ribosomal proteins into the subunit. Circularly permuted GTPase that catalyzes slow GTP hydrolysis, GTPase activity is stimulated by the 30S ribosomal subunit. This chain is Small ribosomal subunit biogenesis GTPase RsgA, found in Synechococcus sp. (strain CC9311).